Reading from the N-terminus, the 104-residue chain is MVSSFFMASTLLAISSCFNSSISRAKGYNDSLESESLEFDVVDVVDVVAAEGTAPAVVDLAPDIFRSFLTTQLFFDNQIPVVIVVEISSTLVLLLSAFLRNLVP.

Positions 1 to 25 (MVSSFFMASTLLAISSCFNSSISRA) are cleaved as a signal peptide. Residues 79–99 (IPVVIVVEISSTLVLLLSAFL) traverse the membrane as a helical segment.

The protein localises to the membrane. This is an uncharacterized protein from Saccharomyces cerevisiae (strain ATCC 204508 / S288c) (Baker's yeast).